We begin with the raw amino-acid sequence, 302 residues long: Oligopeptide transport system permease protein OppC (302 aa).

Residues 1-39 lie on the Cytoplasmic side of the membrane; it reads MMLSKKNSETLENFSEKLEVEGRSLWQDARRRFMHNRAA. Residues 40–62 form a helical membrane-spanning segment; the sequence is VASLIVLFLIALFVTVAPMLSQF. Residues 63–102 lie on the Periplasmic side of the membrane; that stretch reads TYFDTDWGMMSSAPDMASGHYFGTDSSGRDLLVRVAIGGR. Residues 101 to 290 enclose the ABC transmembrane type-1 domain; that stretch reads GRISLMVGIA…VTLFCFNFIG (190 aa). Residues 103–125 form a helical membrane-spanning segment; it reads ISLMVGIAAALVAVIVGTLYGSL. At 126–137 the chain is on the cytoplasmic side; sequence SGYLGGKIDSVM. The helical transmembrane segment at 138 to 160 threads the bilayer; it reads MRLLEILNSFPFMFFVILLVTFF. Topologically, residues 161-163 are periplasmic; that stretch reads GQN. A helical transmembrane segment spans residues 164–183; the sequence is ILLIFVAIGMVSWLDMARIV. Residues 184-213 are Cytoplasmic-facing; it reads RGQTLSLKRKEFIEAAQVGGVSTASIVIRH. Residues 214–236 traverse the membrane as a helical segment; sequence IVPNVLGVVVVYASLLVPSMILF. Over 237-267 the chain is Periplasmic; the sequence is ESFLSFLGLGTQEPLSSWGALLSDGANSMEV. Residues 268-290 form a helical membrane-spanning segment; that stretch reads SPWLLLFPAGFLVVTLFCFNFIG. Residues 291-302 lie on the Cytoplasmic side of the membrane; sequence DGLRDALDPKDR.

This sequence belongs to the binding-protein-dependent transport system permease family. OppBC subfamily. The complex is composed of two ATP-binding proteins (OppD and OppF), two transmembrane proteins (OppB and OppC) and a solute-binding protein (OppA).

It localises to the cell inner membrane. Part of the ABC transporter complex OppABCDF involved in the uptake of oligopeptides, including the cell wall murein tripeptide L-alanyl-gamma-D-glutamyl-meso-diaminopimelate. Responsible for the translocation of the substrate across the membrane. Plays an important nutritional role and is involved in the recycling of cell wall peptides. The protein is Oligopeptide transport system permease protein OppC of Salmonella typhimurium (strain LT2 / SGSC1412 / ATCC 700720).